We begin with the raw amino-acid sequence, 294 residues long: uncharacterized protein (294 aa).

The first 18 residues, Met1 to Ala18, serve as a signal peptide directing secretion.

This is an uncharacterized protein from Rickettsia bellii (strain RML369-C).